We begin with the raw amino-acid sequence, 81 residues long: Cytoplasmic envelopment protein 3 (81 aa).

G2 is lipidated: N-myristoyl glycine; by host. A Di-leucine-like internalization motif motif is present at residues 22–23 (LV). The segment at 41-47 (DFDENVT) is asp/Glu-rich (acidic). Residues 47-81 (TEDADKSTQRRPRVIDVTPKRKPSGKSSHSKCAKC) form a disordered region. The span at 66-81 (KRKPSGKSSHSKCAKC) shows a compositional bias: basic residues.

The protein belongs to the herpesviridae cytoplasmic envelopment protein 3 family. As to quaternary structure, interacts with cytoplasmic envelopment protein 2; this interaction is essential for the proper localization of each protein to the assembly complex and thus for the production of infectious virus. Myristoylation and palmitoylation (probably on one or more of the nearby cysteines at the N-terminus) enable membrane-binding and Golgi apparatus-specific targeting and are essential for efficient packaging. In terms of processing, phosphorylated. Phosphorylation does not seem to be required for recycling to the host Golgi apparatus. Packaging is selective for underphosphorylated forms.

The protein resides in the virion tegument. It localises to the virion membrane. The protein localises to the host cell membrane. It is found in the host Golgi apparatus membrane. Functionally, plays an important role in the cytoplasmic envelopment of tegument proteins and capsids during the assembly and egress processes. Also participates in viral entry at the fusion step probably by regulating the core fusion machinery. In Homo sapiens (Human), this protein is Cytoplasmic envelopment protein 3.